Reading from the N-terminus, the 171-residue chain is T-cell surface glycoprotein CD3 delta chain (171 aa).

Residues 1–21 form the signal peptide; that stretch reads MEHSTFLSGLVLATLLSQVSP. Over 22–105 the chain is Extracellular; that stretch reads FKIPVEELED…CVELDPATLA (84 aa). A disulfide bridge links cysteine 37 with cysteine 73. N-linked (GlcNAc...) asparagine glycosylation is found at asparagine 38, asparagine 54, and asparagine 74. A helical membrane pass occupies residues 106–126; sequence GIIVTDVIATLLLALGVFCFA. At 127-171 the chain is on the cytoplasmic side; the sequence is GHETGRLSGAADTQALLRNDQVYQPLRDRDDAQYSRLGGNWARNK. The ITAM domain maps to 138-166; that stretch reads DTQALLRNDQVYQPLRDRDDAQYSRLGGN. Residues tyrosine 149 and tyrosine 160 each carry the phosphotyrosine modification.

The TCR-CD3 complex is composed of a CD3D/CD3E and a CD3G/CD3E heterodimers that preferentially associate with TCRalpha and TCRbeta, respectively, to form TCRalpha/CD3E/CD3G and TCRbeta/CD3G/CD3E trimers. In turn, the hexamer interacts with CD3Z homodimer to form the TCR-CD3 complex. Alternatively, TCRalpha and TCRbeta can be replaced by TCRgamma and TCRdelta. Interacts with coreceptors CD4 and CD8. Post-translationally, phosphorylated on Tyr residues after T-cell receptor triggering by LCK in association with CD4/CD8. In terms of tissue distribution, CD3D is mostly present on T-lymphocytes with its TCR-CD3 partners. Present also in fetal NK-cells.

The protein localises to the cell membrane. In terms of biological role, part of the TCR-CD3 complex present on T-lymphocyte cell surface that plays an essential role in adaptive immune response. When antigen presenting cells (APCs) activate T-cell receptor (TCR), TCR-mediated signals are transmitted across the cell membrane by the CD3 chains CD3D, CD3E, CD3G and CD3Z. All CD3 chains contain immunoreceptor tyrosine-based activation motifs (ITAMs) in their cytoplasmic domain. Upon TCR engagement, these motifs become phosphorylated by Src family protein tyrosine kinases LCK and FYN, resulting in the activation of downstream signaling pathways. In addition of this role of signal transduction in T-cell activation, CD3D plays an essential role in thymocyte differentiation. Indeed, participates in correct intracellular TCR-CD3 complex assembly and surface expression. In absence of a functional TCR-CD3 complex, thymocytes are unable to differentiate properly. Interacts with CD4 and CD8 and thus serves to establish a functional link between the TCR and coreceptors CD4 and CD8, which is needed for activation and positive selection of CD4 or CD8 T-cells. The sequence is that of T-cell surface glycoprotein CD3 delta chain (CD3D) from Macaca fascicularis (Crab-eating macaque).